The sequence spans 413 residues: Aspartate aminotransferase, cytoplasmic (413 aa).

Glycine 39, tryptophan 141, and asparagine 195 together coordinate L-aspartate. At lysine 259 the chain carries N6-(pyridoxal phosphate)lysine. Position 387 (arginine 387) interacts with L-aspartate.

It belongs to the class-I pyridoxal-phosphate-dependent aminotransferase family. Homodimer. Requires pyridoxal 5'-phosphate as cofactor.

It localises to the cytoplasm. The catalysed reaction is L-aspartate + 2-oxoglutarate = oxaloacetate + L-glutamate. It catalyses the reaction L-cysteine + 2-oxoglutarate = 2-oxo-3-sulfanylpropanoate + L-glutamate. The enzyme catalyses (2S)-2-aminobutanoate + 2-oxoglutarate = 2-oxobutanoate + L-glutamate. It carries out the reaction 3-sulfino-L-alanine + 2-oxoglutarate = 3-sulfinopyruvate + L-glutamate. Functionally, biosynthesis of L-glutamate from L-aspartate or L-cysteine. Important regulator of levels of glutamate, the major excitatory neurotransmitter of the vertebrate central nervous system. Acts as a scavenger of glutamate in brain neuroprotection. The aspartate aminotransferase activity is involved in hepatic glucose synthesis during development and in adipocyte glyceroneogenesis. Using L-cysteine as substrate, regulates levels of mercaptopyruvate, an important source of hydrogen sulfide. Mercaptopyruvate is converted into H(2)S via the action of 3-mercaptopyruvate sulfurtransferase (3MST). Hydrogen sulfide is an important synaptic modulator and neuroprotectant in the brain. The sequence is that of Aspartate aminotransferase, cytoplasmic from Sus scrofa (Pig).